Consider the following 372-residue polypeptide: Ubl carboxyl-terminal hydrolase 18 (372 aa).

The interval 19–45 is disordered; it reads SSQSPADLEEKKEEDSNMKREQPRERP. Residues 26-45 show a composition bias toward basic and acidic residues; that stretch reads LEEKKEEDSNMKREQPRERP. The interval 36-51 is mediates interaction with IFNAR2; the sequence is MKREQPRERPRAWDYP. A mediates interaction with STAT2 region spans residues 51–112; sequence PHGLVGLHNI…MLLLLEKMQD (62 aa). In terms of domain architecture, USP spans 55–370; sequence VGLHNIGQTC…TAYLLVYMKM (316 aa). The active-site Nucleophile is Cys64. Residues 303-312 are mediates interaction with STAT2 and necessary for the negative regulation of the type I IFN signaling pathway; that stretch reads ELFAVIAHVG. Positions 313-372 are mediates interaction with IFNAR2; the sequence is MADSGHYCVYIRNAVDGKWFCFNDSNICLVSWEDIQCTYGNPNYHWQETAYLLVYMKMEC. The Proton acceptor role is filled by His318.

The protein belongs to the peptidase C19 family. In terms of assembly, interacts with STAT2; the interaction is direct. Interacts with IFNAR2; indirectly via STAT2, it negatively regulates the assembly of the ternary interferon-IFNAR1-IFNAR2 complex and inhibits type I interferon signaling. Interacts with STING1. Interacts with USP20.

Its subcellular location is the cytoplasm. The protein localises to the nucleus. The enzyme catalyses Thiol-dependent hydrolysis of ester, thioester, amide, peptide and isopeptide bonds formed by the C-terminal Gly of ubiquitin (a 76-residue protein attached to proteins as an intracellular targeting signal).. Functionally, interferon-induced ISG15-specific protease that plays a crucial role for maintaining a proper balance of ISG15-conjugated proteins in cells. Regulates protein ISGylation by efficiently cleaving ISG15 conjugates linked via isopeptide bonds. Regulates T-cell activation and T-helper 17 (Th17) cell differentiation by deubiquitinating TAK1, likely to keep TAK1-TAB complexes in steady conditions. In turn, restricts activation of NF-kappa-B, NFAT, and JNK as well as expression of IL2 in T-cells after TCR activation. Acts as a molecular adapter with USP20 to promote innate antiviral response through deubiquitinating STING1. Involved also in the negative regulation of the inflammatory response triggered by type I interferon. Upon recruitment by STAT2 to the type I interferon receptor subunit IFNAR2 interferes with the assembly of the ternary interferon-IFNAR1-IFNAR2 complex and acts as a negative regulator of the type I interferon signaling pathway. Its function is as follows. Has enzymatic activity similar to isoform 1 and interferes with type I interferon signaling. Major deISGylation enzyme for nuclear proteins. The chain is Ubl carboxyl-terminal hydrolase 18 (USP18) from Homo sapiens (Human).